Consider the following 705-residue polypeptide: 1,4-alpha-glucan branching enzyme GlgB (705 aa).

Residue D393 is the Nucleophile of the active site. E446 (proton donor) is an active-site residue.

The protein belongs to the glycosyl hydrolase 13 family. GlgB subfamily. In terms of assembly, monomer.

The catalysed reaction is Transfers a segment of a (1-&gt;4)-alpha-D-glucan chain to a primary hydroxy group in a similar glucan chain.. It participates in glycan biosynthesis; glycogen biosynthesis. In terms of biological role, catalyzes the formation of the alpha-1,6-glucosidic linkages in glycogen by scission of a 1,4-alpha-linked oligosaccharide from growing alpha-1,4-glucan chains and the subsequent attachment of the oligosaccharide to the alpha-1,6 position. This chain is 1,4-alpha-glucan branching enzyme GlgB, found in Picrophilus torridus (strain ATCC 700027 / DSM 9790 / JCM 10055 / NBRC 100828 / KAW 2/3).